The following is a 443-amino-acid chain: Toxin YjjJ (443 aa).

D342 serves as the catalytic Proton acceptor.

It belongs to the HipA Ser/Thr kinase family.

Functionally, toxic when overexpressed in E.coli, leading to long filamentous cells. The toxic effect is neutralized by non-cognate antitoxin HipB. Does not seem to inhibit DNA, RNA or protein synthesis, and unlike paralogous toxin HipA its toxic activity is not counteracted by overexpression of GltX. Binds DNA. Might be a protein kinase. The protein is Toxin YjjJ (yjjJ) of Escherichia coli (strain K12).